A 246-amino-acid chain; its full sequence is 1-(5-phosphoribosyl)-5-[(5-phosphoribosylamino)methylideneamino] imidazole-4-carboxamide isomerase (246 aa).

The Proton acceptor role is filled by Asp8. The Proton donor role is filled by Asp129.

Belongs to the HisA/HisF family.

Its subcellular location is the cytoplasm. It carries out the reaction 1-(5-phospho-beta-D-ribosyl)-5-[(5-phospho-beta-D-ribosylamino)methylideneamino]imidazole-4-carboxamide = 5-[(5-phospho-1-deoxy-D-ribulos-1-ylimino)methylamino]-1-(5-phospho-beta-D-ribosyl)imidazole-4-carboxamide. It participates in amino-acid biosynthesis; L-histidine biosynthesis; L-histidine from 5-phospho-alpha-D-ribose 1-diphosphate: step 4/9. In Nitrobacter hamburgensis (strain DSM 10229 / NCIMB 13809 / X14), this protein is 1-(5-phosphoribosyl)-5-[(5-phosphoribosylamino)methylideneamino] imidazole-4-carboxamide isomerase.